The sequence spans 737 residues: tRNA (guanine(27)-N(2))-dimethyltransferase (737 aa).

Over residues 1–10 (MENMAEEELL) the composition is skewed to acidic residues. The tract at residues 1 to 65 (MENMAEEELL…ASAPVPAPAL (65 aa)) is disordered. Residues 17–49 (VVQVPVPTPTPDSARVPAPAPDSAPVSASTPAP) show a composition bias toward low complexity. Thr24 bears the Phosphothreonine mark. Residues 50–62 (ASAPTPASAPVPA) are compositionally biased toward pro residues. Ser72 is subject to Phosphoserine. The Nucleolar localization signal motif lies at 141–145 (HKLHR). The segment at 190-212 (YHCIICSATITRRTDMLGHVRRH) adopts a C2H2-type zinc-finger fold. The Trm1 methyltransferase domain occupies 233 to 692 (EILKEADTDV…APLMQFKSIL (460 aa)). Positions 266, 313, 363, and 364 each coordinate S-adenosyl-L-methionine. The Zn(2+) site is built by Cys494, Cys497, Cys519, and Cys521. Lys589 is covalently cross-linked (Glycyl lysine isopeptide (Lys-Gly) (interchain with G-Cter in SUMO2)). A Phosphoserine modification is found at Ser616.

Belongs to the class I-like SAM-binding methyltransferase superfamily. Trm1 family.

The protein localises to the nucleus. Its subcellular location is the nucleolus. The catalysed reaction is guanosine(27) in tRNA(Tyr) + 2 S-adenosyl-L-methionine = N(2)-dimethylguanosine(27) in tRNA(Tyr) + 2 S-adenosyl-L-homocysteine + 2 H(+). Specifically dimethylates a single guanine residue at position 27 of tRNA(Tyr) using S-adenosyl-L-methionine as donor of the methyl groups. Dimethylation at position 27 of tRNA(Tyr) is required for efficient translation of tyrosine codons. Also required to maintain 3-(3-amino-3-carboxypropyl)uridine (acp3U) in the D-loop of several cytoplasmic tRNAs. The sequence is that of tRNA (guanine(27)-N(2))-dimethyltransferase (TRMT1L) from Bos taurus (Bovine).